The primary structure comprises 727 residues: Iron-sulfur clusters transporter atm1, mitochondrial (727 aa).

Residues N46 to T97 are disordered. Residues A60 to V77 show a composition bias toward polar residues. A compositionally biased stretch (basic and acidic residues) spans K81–L94. The helical transmembrane segment at V131–F152 threads the bilayer. Positions V131 to Q421 constitute an ABC transmembrane type-1 domain. The Mitochondrial intermembrane portion of the chain corresponds to K153–G175. A helical membrane pass occupies residues S176 to F199. The Mitochondrial matrix portion of the chain corresponds to A200 to L248. Residues L249–Y272 traverse the membrane as a helical segment. Q273 is a topological domain (mitochondrial intermembrane). Residues Y274 to I294 form a helical membrane-spanning segment. Topologically, residues T295–A360 are mitochondrial matrix. Residues R300–R304 and N363–Q366 contribute to the glutathione site. The helical transmembrane segment at F361–Y379 threads the bilayer. Topologically, residues L380 to D394 are mitochondrial intermembrane. Residues L395 to Y416 form a helical membrane-spanning segment. G413 is a binding site for glutathione. The Mitochondrial matrix segment spans residues R417 to Q727. An ABC transporter domain is found at I456–A692. ATP is bound by residues Y465 and G489–R500. The span at E702 to M719 shows a compositional bias: basic and acidic residues. The interval E702–Q727 is disordered.

The protein belongs to the ABC transporter superfamily. ABCB family. Heavy Metal importer (TC 3.A.1.210) subfamily. Homodimer.

Its subcellular location is the mitochondrion inner membrane. In terms of biological role, performs an essential function in the generation of cytoplasmic iron-sulfur proteins by mediating the ATP-dependent export of Fe/S cluster precursors synthesized by nfs1 and other mitochondrial proteins. Hydrolyzes ATP. Binds glutathione and may function by transporting a glutathione-conjugated iron-sulfur compound. The sequence is that of Iron-sulfur clusters transporter atm1, mitochondrial from Aspergillus fumigatus (strain ATCC MYA-4609 / CBS 101355 / FGSC A1100 / Af293) (Neosartorya fumigata).